We begin with the raw amino-acid sequence, 618 residues long: DNA ligase 2 (618 aa).

A compositionally biased stretch (basic and acidic residues) spans 197-208; that stretch reads DKKTLESREDAK. The tract at residues 197-250 is disordered; it reads DKKTLESREDAKSVPPASQPEITNKISGDTSPNTSESVQTKKSDPDTSSNVDPS. Residues 216-234 show a composition bias toward polar residues; sequence PEITNKISGDTSPNTSESV. Glu312 lines the ATP pocket. The active-site N6-AMP-lysine intermediate is the Lys314. Residues Arg319, Arg334, Glu363, Phe403, Arg476, and Lys482 each contribute to the ATP site. A disordered region spans residues 459–480; sequence HEGVMLKDPDSTYNPGSRGQHW.

The protein belongs to the ATP-dependent DNA ligase family. Requires Mg(2+) as cofactor.

It carries out the reaction ATP + (deoxyribonucleotide)n-3'-hydroxyl + 5'-phospho-(deoxyribonucleotide)m = (deoxyribonucleotide)n+m + AMP + diphosphate.. Functionally, DNA ligase that seals nicks in double-stranded DNA during DNA replication, DNA recombination and DNA repair. This chain is DNA ligase 2, found in Haloquadratum walsbyi (strain DSM 16790 / HBSQ001).